The sequence spans 556 residues: Putative D-arabinono-1,4-lactone oxidase (556 aa).

Residues 47-217 form the FAD-binding PCMH-type domain; it reads FTSLPELYIQ…TEVTFKAVPA (171 aa). At His-84 the chain carries Pros-8alpha-FAD histidine.

This sequence belongs to the oxygen-dependent FAD-linked oxidoreductase family. Requires FAD as cofactor.

It is found in the mitochondrion membrane. The enzyme catalyses D-arabinono-1,4-lactone + O2 = dehydro-D-arabinono-1,4-lactone + H2O2 + H(+). It participates in cofactor biosynthesis; D-erythroascorbate biosynthesis; dehydro-D-arabinono-1,4-lactone from D-arabinose: step 2/2. The protein is Putative D-arabinono-1,4-lactone oxidase (alo-1) of Neurospora crassa (strain ATCC 24698 / 74-OR23-1A / CBS 708.71 / DSM 1257 / FGSC 987).